The sequence spans 350 residues: Phosphate acyltransferase (350 aa).

It belongs to the PlsX family. As to quaternary structure, homodimer. Probably interacts with PlsY.

It localises to the cytoplasm. It carries out the reaction a fatty acyl-[ACP] + phosphate = an acyl phosphate + holo-[ACP]. The protein operates within lipid metabolism; phospholipid metabolism. Functionally, catalyzes the reversible formation of acyl-phosphate (acyl-PO(4)) from acyl-[acyl-carrier-protein] (acyl-ACP). This enzyme utilizes acyl-ACP as fatty acyl donor, but not acyl-CoA. The chain is Phosphate acyltransferase from Chelativorans sp. (strain BNC1).